The sequence spans 246 residues: Large ribosomal subunit protein uL3 (246 aa).

The tract at residues 140 to 162 (SHRSIGSTGGRQDPGKTFKNKKM) is disordered. Position 151 is an N5-methylglutamine (Gln-151).

This sequence belongs to the universal ribosomal protein uL3 family. As to quaternary structure, part of the 50S ribosomal subunit. Forms a cluster with proteins L14 and L19. In terms of processing, methylated by PrmB.

Functionally, one of the primary rRNA binding proteins, it binds directly near the 3'-end of the 23S rRNA, where it nucleates assembly of the 50S subunit. This is Large ribosomal subunit protein uL3 from Methylobacterium sp. (strain 4-46).